Reading from the N-terminus, the 161-residue chain is UPF0262 protein Rru_A2770 (161 aa).

The protein belongs to the UPF0262 family.

The sequence is that of UPF0262 protein Rru_A2770 from Rhodospirillum rubrum (strain ATCC 11170 / ATH 1.1.1 / DSM 467 / LMG 4362 / NCIMB 8255 / S1).